The following is a 398-amino-acid chain: Aurofusarin biosynthesis regulatory protein aurR1 (398 aa).

The zn(2)-C6 fungal-type DNA-binding region spans 18–45 (CDNCAKSKVRCGKEQPWCQRCERRGQVC). Disordered stretches follow at residues 52–73 (RSRK…GTPP) and 275–314 (AATI…SSLI). 2 stretches are compositionally biased toward basic and acidic residues: residues 56–67 (RTLDAAHPESDQ) and 289–298 (DGKDTERSVS). Positions 299 to 311 (RDTNVSQDGSEPS) are enriched in polar residues.

It is found in the nucleus. In terms of biological role, transcription factor that specifically regulates the expression of the gene cluster that mediates the biosynthesis of aurofusarin, a red mycelium pigment which is acting as a mycotoxin. The protein is Aurofusarin biosynthesis regulatory protein aurR1 of Gibberella zeae (strain ATCC MYA-4620 / CBS 123657 / FGSC 9075 / NRRL 31084 / PH-1) (Wheat head blight fungus).